A 279-amino-acid polypeptide reads, in one-letter code: MQIGCHVSISGSIDKSVDNAVERECSAFQIFTRNPRGWHAKTLTKDDITNFKSKLKESKIDRFATCAHMPYLPNLATPKEDGFEKSVKTLVDEVERCAQLGIPYLVTHLGSHLGTGEEAGIKKLVKGLTEAGKTKNDVMILLENTAGQKNSVGSDFKQLGEIFKQLKPAKKFGVCLDTCHAFVFGYDLRTEAKVKETFSEFDKYVGIDNLKILHLNDAKGDLGCNLDRHYHLGMGGIGEKGISAIVKFANKKKIPIILETPIDDDRDDFENIRKAKEFA.

Zn(2+) contacts are provided by His-68, His-108, Glu-143, Asp-177, His-180, His-214, Asp-227, His-229, and Glu-259.

This sequence belongs to the AP endonuclease 2 family. Zn(2+) serves as cofactor.

It catalyses the reaction Endonucleolytic cleavage to 5'-phosphooligonucleotide end-products.. Endonuclease IV plays a role in DNA repair. It cleaves phosphodiester bonds at apurinic or apyrimidinic (AP) sites, generating a 3'-hydroxyl group and a 5'-terminal sugar phosphate. This Nitrosopumilus maritimus (strain SCM1) protein is Probable endonuclease 4.